Consider the following 201-residue polypeptide: Cytochrome c oxidase assembly protein CtaG (201 aa).

Residues 1-12 (MTDQGENEKKQR) lie on the Cytoplasmic side of the membrane. Residues 13-35 (RSNATIAVACLSFFVCMIGAAYA) form a helical; Signal-anchor for type II membrane protein membrane-spanning segment. At 36-201 (SVPLYRIFCQ…KAVGSTRNGG (166 aa)) the chain is on the periplasmic side.

This sequence belongs to the COX11/CtaG family.

The protein localises to the cell inner membrane. Functionally, exerts its effect at some terminal stage of cytochrome c oxidase synthesis, probably by being involved in the insertion of the copper B into subunit I. This Brucella suis biovar 1 (strain 1330) protein is Cytochrome c oxidase assembly protein CtaG.